We begin with the raw amino-acid sequence, 279 residues long: 3-methyl-2-oxobutanoate hydroxymethyltransferase 2 (279 aa).

The Mg(2+) site is built by D58 and D97. 3-methyl-2-oxobutanoate contacts are provided by residues 58-59 (DS), D97, and K126. E128 contributes to the Mg(2+) binding site. The active-site Proton acceptor is the E195.

This sequence belongs to the PanB family. In terms of assembly, homodecamer; pentamer of dimers. Mg(2+) is required as a cofactor.

The protein resides in the cytoplasm. It carries out the reaction 3-methyl-2-oxobutanoate + (6R)-5,10-methylene-5,6,7,8-tetrahydrofolate + H2O = 2-dehydropantoate + (6S)-5,6,7,8-tetrahydrofolate. It functions in the pathway cofactor biosynthesis; (R)-pantothenate biosynthesis; (R)-pantoate from 3-methyl-2-oxobutanoate: step 1/2. Functionally, catalyzes the reversible reaction in which hydroxymethyl group from 5,10-methylenetetrahydrofolate is transferred onto alpha-ketoisovalerate to form ketopantoate. The polypeptide is 3-methyl-2-oxobutanoate hydroxymethyltransferase 2 (Methylibium petroleiphilum (strain ATCC BAA-1232 / LMG 22953 / PM1)).